A 146-amino-acid chain; its full sequence is Angiogenin (146 aa).

The N-terminal stretch at 1–24 is a signal peptide; sequence MVMGPHLLLLVFILGLGLTPPTLA. Gln-25 bears the Pyrrolidone carboxylic acid mark. His-37 (proton acceptor) is an active-site residue. 3 disulfides stabilise this stretch: Cys-50–Cys-105, Cys-63–Cys-116, and Cys-81–Cys-131. The Nucleolar localization signal signature appears at 55-59; it reads RLRNM. TRNA-binding residues include Cys-105 and Ile-127. The Proton donor role is filled by His-138.

This sequence belongs to the pancreatic ribonuclease family. Homodimer. Interacts with RNH1; inhibiting ANG ribonuclease activity. Interacts with PCNA.

It localises to the secreted. Its subcellular location is the nucleus. The protein localises to the nucleolus. It is found in the cytoplasm. The protein resides in the stress granule. With respect to regulation, has weak tRNA ribonuclease activity by itself due to partial autoinhibition by its C-terminus, which folds into a short alpha-helix that partially occludes the substrate-binding site. In absence of stress, the ribonuclease activity is inhibited by RNH1 in the cytoplasm. In response to stress, dissociates from RNH1 in the cytoplasm and associates with cytoplasmic ribosomes with vacant A-sites: ribosomes directly activate the tRNA ribonuclease activity of ANG by refolding the C-terminal alpha-helix. In response to stress, the angiogenic activity of ANG is inhibited by RNH1 in the nucleus. Its function is as follows. Secreted ribonuclease that can either promote or restrict cell proliferation of target cells, depending on the context. Endocytosed in target cells via its receptor PLXNB2 and translocates to the cytoplasm or nucleus. Under stress conditions, localizes to the cytoplasm and promotes the assembly of stress granules (SGs): specifically cleaves a subset of tRNAs within anticodon loops to produce tRNA-derived stress-induced fragments (tiRNAs), resulting in translation repression and inhibition of cell proliferation. tiRNas also prevent formation of apoptosome, thereby promoting cell survival. Preferentially cleaves RNAs between a pyrimidine and an adenosine residue, suggesting that it cleaves the anticodon loop of tRNA(Ala) (32-UUAGCAU-38) after positions 33 and 36. Cleaves a subset of tRNAs, including tRNA(Ala), tRNA(Glu), tRNA(Gly), tRNA(Lys), tRNA(Val), tRNA(His), tRNA(Asp) and tRNA(Sec). Under growth conditions and in differentiated cells, translocates to the nucleus and stimulates ribosomal RNA (rRNA) transcription, including that containing the initiation site sequences of 45S rRNA, thereby promoting cell growth and proliferation. Angiogenin induces vascularization of normal and malignant tissues via its ability to promote rRNA transcription. Involved in hematopoietic stem and progenitor cell (HSPC) growth and survival by promoting rRNA transcription in growth conditions and inhibiting translation in response to stress, respectively. Mediates the crosstalk between myeloid and intestinal epithelial cells to protect the intestinal epithelial barrier integrity: secreted by myeloid cells and promotes intestinal epithelial cells proliferation and survival. Also mediates osteoclast-endothelial cell crosstalk in growing bone: produced by osteoclasts and protects the neighboring vascular cells against senescence by promoting rRNA transcription. The polypeptide is Angiogenin (ANG) (Saimiri sciureus (Common squirrel monkey)).